Here is a 219-residue protein sequence, read N- to C-terminus: Cytidylate kinase (219 aa).

Residue G21–T29 coordinates ATP.

It belongs to the cytidylate kinase family. Type 1 subfamily.

It is found in the cytoplasm. The enzyme catalyses CMP + ATP = CDP + ADP. It carries out the reaction dCMP + ATP = dCDP + ADP. This is Cytidylate kinase from Rickettsia typhi (strain ATCC VR-144 / Wilmington).